The sequence spans 159 residues: Troponin C, skeletal muscle (159 aa).

T1 is subject to N-acetylthreonine. 4 EF-hand domains span residues 14 to 49 (EMIA…LGQT), 50 to 85 (PTKE…QMKE), 90 to 125 (KSEE…SGEH), and 126 to 159 (VTDE…EGVQ). D27, D29, D33, E38, D63, D65, S67, T69, E74, D103, N105, D107, Y109, E114, D139, N141, D143, R145, and E150 together coordinate Ca(2+).

This sequence belongs to the troponin C family.

Functionally, troponin is the central regulatory protein of striated muscle contraction. Tn consists of three components: Tn-I which is the inhibitor of actomyosin ATPase, Tn-T which contains the binding site for tropomyosin and Tn-C. The binding of calcium to Tn-C abolishes the inhibitory action of Tn on actin filaments. The protein is Troponin C, skeletal muscle (TNNC2) of Sus scrofa (Pig).